A 156-amino-acid chain; its full sequence is 6,7-dimethyl-8-ribityllumazine synthase (156 aa).

5-amino-6-(D-ribitylamino)uracil contacts are provided by residues F22, A57–E59, and T81–I83. Residue G86–T87 participates in (2S)-2-hydroxy-3-oxobutyl phosphate binding. The Proton donor role is filled by H89. F114 contributes to the 5-amino-6-(D-ribitylamino)uracil binding site. R128 lines the (2S)-2-hydroxy-3-oxobutyl phosphate pocket.

This sequence belongs to the DMRL synthase family. In terms of assembly, forms an icosahedral capsid composed of 60 subunits, arranged as a dodecamer of pentamers.

It catalyses the reaction (2S)-2-hydroxy-3-oxobutyl phosphate + 5-amino-6-(D-ribitylamino)uracil = 6,7-dimethyl-8-(1-D-ribityl)lumazine + phosphate + 2 H2O + H(+). It functions in the pathway cofactor biosynthesis; riboflavin biosynthesis; riboflavin from 2-hydroxy-3-oxobutyl phosphate and 5-amino-6-(D-ribitylamino)uracil: step 1/2. In terms of biological role, catalyzes the formation of 6,7-dimethyl-8-ribityllumazine by condensation of 5-amino-6-(D-ribitylamino)uracil with 3,4-dihydroxy-2-butanone 4-phosphate. This is the penultimate step in the biosynthesis of riboflavin. This is 6,7-dimethyl-8-ribityllumazine synthase from Escherichia coli O45:K1 (strain S88 / ExPEC).